Consider the following 166-residue polypeptide: Bacterial non-heme ferritin (166 aa).

The Ferritin-like diiron domain maps to 2 to 145 (LSKNLLEALN…THINYLTRIG (144 aa)). Fe cation-binding residues include E17, E50, H53, E94, and Q127.

It belongs to the ferritin family. Prokaryotic subfamily.

It is found in the cytoplasm. It catalyses the reaction 4 Fe(2+) + O2 + 6 H2O = 4 iron(III) oxide-hydroxide + 12 H(+). Functionally, iron-storage protein. This Staphylococcus aureus (strain MRSA252) protein is Bacterial non-heme ferritin (ftnA).